The primary structure comprises 708 residues: Soluble guanylate cyclase gcy-37 (708 aa).

H105 contributes to the heme binding site. Residues 368-409 (LNQSRICQMELNKKLEETMKKMKKMTEELEVKKSQTDRLLFE) are a coiled coil. Residues 434-562 (SVIFTDIPDF…NTVNVTKSIC (129 aa)) form the Guanylate cyclase domain. D439 and D483 together coordinate Mg(2+).

The protein belongs to the adenylyl cyclase class-4/guanylyl cyclase family. As to quaternary structure, heterodimer; with other soluble guanylate cyclases. It depends on heme as a cofactor. As to expression, expressed in a small number of neurons, corresponding to URX, AQR and PQR neurons.

It localises to the cytoplasm. The enzyme catalyses GTP = 3',5'-cyclic GMP + diphosphate. Its activity is regulated as follows. May be regulated by molecular oxygen. Probably not activated by nitric oxide (NO). In terms of biological role, synthesizes cyclic GMP (cGMP) from GTP. May play a role in sensory neurons. The protein is Soluble guanylate cyclase gcy-37 (gcy-37) of Caenorhabditis elegans.